We begin with the raw amino-acid sequence, 106 residues long: SH3 domain-binding glutamic acid-rich-like protein 2-B (106 aa).

The SH3-binding motif lies at 61 to 67 (QGNPLPP).

It belongs to the SH3BGR family.

The protein resides in the nucleus. This chain is SH3 domain-binding glutamic acid-rich-like protein 2-B (sh3bgrl2-b), found in Xenopus laevis (African clawed frog).